Reading from the N-terminus, the 257-residue chain is Pyridoxine 5'-phosphate synthase (257 aa).

Residue Asn-6 participates in 3-amino-2-oxopropyl phosphate binding. 8 to 9 serves as a coordination point for 1-deoxy-D-xylulose 5-phosphate; the sequence is DH. A 3-amino-2-oxopropyl phosphate-binding site is contributed by Arg-17. The Proton acceptor role is filled by His-41. 1-deoxy-D-xylulose 5-phosphate contacts are provided by Arg-43 and His-48. Glu-68 (proton acceptor) is an active-site residue. Thr-98 provides a ligand contact to 1-deoxy-D-xylulose 5-phosphate. His-210 (proton donor) is an active-site residue. 3-amino-2-oxopropyl phosphate contacts are provided by residues Gly-211 and 232-233; that span reads GQ.

Belongs to the PNP synthase family. Homooctamer; tetramer of dimers.

The protein localises to the cytoplasm. The catalysed reaction is 3-amino-2-oxopropyl phosphate + 1-deoxy-D-xylulose 5-phosphate = pyridoxine 5'-phosphate + phosphate + 2 H2O + H(+). It participates in cofactor biosynthesis; pyridoxine 5'-phosphate biosynthesis; pyridoxine 5'-phosphate from D-erythrose 4-phosphate: step 5/5. In terms of biological role, catalyzes the complicated ring closure reaction between the two acyclic compounds 1-deoxy-D-xylulose-5-phosphate (DXP) and 3-amino-2-oxopropyl phosphate (1-amino-acetone-3-phosphate or AAP) to form pyridoxine 5'-phosphate (PNP) and inorganic phosphate. This is Pyridoxine 5'-phosphate synthase from Campylobacter jejuni subsp. jejuni serotype O:6 (strain 81116 / NCTC 11828).